Reading from the N-terminus, the 210-residue chain is Lysine N-acyltransferase MbtK (210 aa).

Residue H130 coordinates substrate. The active-site Proton acceptor is the D168.

Belongs to the lysine N-acyltransferase MbtK family. Monomer.

Its pathway is siderophore biosynthesis; mycobactin biosynthesis. Its function is as follows. Acyltransferase required for the direct transfer of medium- to long-chain fatty acyl moieties from a carrier protein (MbtL) on to the epsilon-amino group of lysine residue in the mycobactin core. In Mycobacterium tuberculosis (strain CDC 1551 / Oshkosh), this protein is Lysine N-acyltransferase MbtK (mbtK).